A 124-amino-acid polypeptide reads, in one-letter code: U33-theraphotoxin-Cg1a (124 aa).

The signal sequence occupies residues 1–17; that stretch reads MKFAVAIAFTLLVCVFA. 5 disulfides stabilise this stretch: Cys-26-Cys-37, Cys-31-Cys-51, Cys-36-Cys-75, Cys-61-Cys-83, and Cys-77-Cys-94. A compositionally biased stretch (basic and acidic residues) spans 93–108; that stretch reads RCQEESGKSDKSKESQ. The disordered stretch occupies residues 93 to 124; it reads RCQEESGKSDKSKESQGSDESEESEESKESCG. Acidic residues predominate over residues 109-118; the sequence is GSDESEESEE.

This sequence belongs to the neurotoxin 32 family. Expressed by the venom gland.

It localises to the secreted. The sequence is that of U33-theraphotoxin-Cg1a from Chilobrachys guangxiensis (Chinese earth tiger tarantula).